The sequence spans 447 residues: N-succinylarginine dihydrolase (447 aa).

Residues 19–28 (AGLSFGNEAS), N110, and 137–138 (HR) contribute to the substrate site. E174 is an active-site residue. Residue R212 coordinates substrate. The active site involves H248. Residues D250 and N359 each coordinate substrate. Catalysis depends on C365, which acts as the Nucleophile.

The protein belongs to the succinylarginine dihydrolase family. As to quaternary structure, homodimer.

The catalysed reaction is N(2)-succinyl-L-arginine + 2 H2O + 2 H(+) = N(2)-succinyl-L-ornithine + 2 NH4(+) + CO2. The protein operates within amino-acid degradation; L-arginine degradation via AST pathway; L-glutamate and succinate from L-arginine: step 2/5. Catalyzes the hydrolysis of N(2)-succinylarginine into N(2)-succinylornithine, ammonia and CO(2). In Escherichia coli O6:K15:H31 (strain 536 / UPEC), this protein is N-succinylarginine dihydrolase.